Consider the following 102-residue polypeptide: 10 kDa heat shock protein, mitochondrial (102 aa).

Alanine 2 bears the N-acetylalanine mark. The residue at position 8 (lysine 8) is an N6-acetyllysine. The residue at position 28 (lysine 28) is an N6-succinyllysine. An N6-acetyllysine; alternate modification is found at lysine 40. 3 positions are modified to N6-malonyllysine; alternate: lysine 40, lysine 54, and lysine 56. Residues lysine 40, lysine 54, and lysine 56 each carry the N6-succinyllysine; alternate modification. The residue at position 56 (lysine 56) is an N6-acetyllysine; alternate. At serine 57 the chain carries Phosphoserine. N6-acetyllysine; alternate is present on residues lysine 66 and lysine 70. Lysine 66 and lysine 70 each carry N6-succinyllysine; alternate. The residue at position 79 (threonine 79) is a Phosphothreonine. Residues lysine 80 and lysine 86 each carry the N6-acetyllysine; alternate modification. N6-succinyllysine; alternate is present on residues lysine 80 and lysine 86. An N6-acetyllysine modification is found at lysine 99.

The protein belongs to the GroES chaperonin family. In terms of assembly, homoheptamer arranged in a ring structure. 2 heptameric Hsp10 rings interact with a Hsp60 tetradecamer in the structure of a back-to-back double heptameric ring to form the symmetrical football complex.

It is found in the mitochondrion matrix. Co-chaperonin implicated in mitochondrial protein import and macromolecular assembly. Together with Hsp60, facilitates the correct folding of imported proteins. May also prevent misfolding and promote the refolding and proper assembly of unfolded polypeptides generated under stress conditions in the mitochondrial matrix. The functional units of these chaperonins consist of heptameric rings of the large subunit Hsp60, which function as a back-to-back double ring. In a cyclic reaction, Hsp60 ring complexes bind one unfolded substrate protein per ring, followed by the binding of ATP and association with 2 heptameric rings of the co-chaperonin Hsp10. This leads to sequestration of the substrate protein in the inner cavity of Hsp60 where, for a certain period of time, it can fold undisturbed by other cell components. Synchronous hydrolysis of ATP in all Hsp60 subunits results in the dissociation of the chaperonin rings and the release of ADP and the folded substrate protein. In Mus musculus (Mouse), this protein is 10 kDa heat shock protein, mitochondrial (Hspe1).